The primary structure comprises 121 residues: Large ribosomal subunit protein bL12 (121 aa).

This sequence belongs to the bacterial ribosomal protein bL12 family. Homodimer. Part of the ribosomal stalk of the 50S ribosomal subunit. Forms a multimeric L10(L12)X complex, where L10 forms an elongated spine to which 2 to 4 L12 dimers bind in a sequential fashion. Binds GTP-bound translation factors.

Forms part of the ribosomal stalk which helps the ribosome interact with GTP-bound translation factors. Is thus essential for accurate translation. This is Large ribosomal subunit protein bL12 from Escherichia coli O81 (strain ED1a).